Consider the following 675-residue polypeptide: Methionine--tRNA ligase (675 aa).

A 'HIGH' region motif is present at residues 15 to 25 (PYANGSIHLGH). Zn(2+) is bound by residues cysteine 146, cysteine 149, cysteine 159, and cysteine 162. Residues 332–336 (KMSKS) carry the 'KMSKS' region motif. Position 335 (lysine 335) interacts with ATP. Positions 573–675 (DFAKVDMRIA…SGAQPGMQVK (103 aa)) constitute a tRNA-binding domain.

It belongs to the class-I aminoacyl-tRNA synthetase family. MetG type 1 subfamily. Homodimer. Zn(2+) is required as a cofactor.

The protein localises to the cytoplasm. It carries out the reaction tRNA(Met) + L-methionine + ATP = L-methionyl-tRNA(Met) + AMP + diphosphate. Is required not only for elongation of protein synthesis but also for the initiation of all mRNA translation through initiator tRNA(fMet) aminoacylation. The polypeptide is Methionine--tRNA ligase (Serratia proteamaculans (strain 568)).